Consider the following 262-residue polypeptide: MRRTLYRLMIELTNGRFTSYILRKFAQSRLSSIIIPSYVKVFQINQDEMEKGLKEYGTLHDLFTRRLKEGKRSIDTDASSIVSPVDGVFADQGPIEDTKTFDIKGKRYSIVDMLGNEERAKRYAGGTYMVIYLSPSHYHRIHSPLSGSVTERFVLGRKSYPVNAAGMEYGKEPLSKNYRSVTEVNSDGEHMALVKVGAMFINSIELLHERSTVQKGEEMAYFTFGSTVVLLFEKDMIKAVQELTSGQELRLGEKIATRVSHK.

Residues aspartate 86, histidine 142, and serine 226 each act as charge relay system; for autoendoproteolytic cleavage activity in the active site. Serine 226 acts as the Schiff-base intermediate with substrate; via pyruvic acid; for decarboxylase activity in catalysis. At serine 226 the chain carries Pyruvic acid (Ser); by autocatalysis.

Belongs to the phosphatidylserine decarboxylase family. PSD-B subfamily. Prokaryotic type I sub-subfamily. Heterodimer of a large membrane-associated beta subunit and a small pyruvoyl-containing alpha subunit. It depends on pyruvate as a cofactor. Post-translationally, is synthesized initially as an inactive proenzyme. Formation of the active enzyme involves a self-maturation process in which the active site pyruvoyl group is generated from an internal serine residue via an autocatalytic post-translational modification. Two non-identical subunits are generated from the proenzyme in this reaction, and the pyruvate is formed at the N-terminus of the alpha chain, which is derived from the carboxyl end of the proenzyme. The autoendoproteolytic cleavage occurs by a canonical serine protease mechanism, in which the side chain hydroxyl group of the serine supplies its oxygen atom to form the C-terminus of the beta chain, while the remainder of the serine residue undergoes an oxidative deamination to produce ammonia and the pyruvoyl prosthetic group on the alpha chain. During this reaction, the Ser that is part of the protease active site of the proenzyme becomes the pyruvoyl prosthetic group, which constitutes an essential element of the active site of the mature decarboxylase.

The protein localises to the cell membrane. It catalyses the reaction a 1,2-diacyl-sn-glycero-3-phospho-L-serine + H(+) = a 1,2-diacyl-sn-glycero-3-phosphoethanolamine + CO2. It functions in the pathway phospholipid metabolism; phosphatidylethanolamine biosynthesis; phosphatidylethanolamine from CDP-diacylglycerol: step 2/2. In terms of biological role, catalyzes the formation of phosphatidylethanolamine (PtdEtn) from phosphatidylserine (PtdSer). In Bacillus mycoides (strain KBAB4) (Bacillus weihenstephanensis), this protein is Phosphatidylserine decarboxylase proenzyme.